The primary structure comprises 124 residues: Non-structural protein 2 (124 aa).

Positions 121–124 (DLNP) match the DLNP; interaction with MAP1B motif.

The protein belongs to the pneumovirus non-structural protein 2 family. In terms of assembly, monomer (instable). Homomultimer. Heteromultimer with NS1. Interacts with host RIGI (via N-terminus); this interaction prevents host signaling pathway involved in interferon production. Interacts with host MAP1B/microtubule-associated protein 1B.

It localises to the host mitochondrion. Functionally, plays a major role in antagonizing the type I IFN-mediated antiviral response. Acts cooperatively with NS1 to repress activation and nuclear translocation of host IFN-regulatory factor IRF3. Interacts with the host cytoplasmic sensor of viral nucleic acids RIGI and prevents the interaction with its downstream partner MAVS. Together with NS2, participates in the proteasomal degradation of host STAT2, IRF3, IRF7, TBK1 and RIGI through a NS-degradasome involving CUL2 and Elongin-C. The degradasome requires an intact mitochondrial MAVS. Induces host SOCS1 expression. Induces activation of NF-kappa-B. Suppresses premature apoptosis by an NF-kappa-B-dependent, interferon-independent mechanism promoting continued viral replication. The sequence is that of Non-structural protein 2 (1B) from Homo sapiens (Human).